The following is a 439-amino-acid chain: Glutamate-1-semialdehyde 2,1-aminomutase (439 aa).

At Lys-270 the chain carries N6-(pyridoxal phosphate)lysine.

It belongs to the class-III pyridoxal-phosphate-dependent aminotransferase family. HemL subfamily. Homodimer. It depends on pyridoxal 5'-phosphate as a cofactor.

The protein localises to the cytoplasm. It carries out the reaction (S)-4-amino-5-oxopentanoate = 5-aminolevulinate. The protein operates within porphyrin-containing compound metabolism; protoporphyrin-IX biosynthesis; 5-aminolevulinate from L-glutamyl-tRNA(Glu): step 2/2. This chain is Glutamate-1-semialdehyde 2,1-aminomutase, found in Kocuria rhizophila (strain ATCC 9341 / DSM 348 / NBRC 103217 / DC2201).